The sequence spans 439 residues: Dolichyl-diphosphooligosaccharide--protein glycosyltransferase 48 kDa subunit (439 aa).

An N-terminal signal peptide occupies residues 1-26; that stretch reads MEPSTAARAWALFWLLPPLLGAVCAS. Over 27-410 the chain is Lumenal; sequence GPRTLVLLDN…YERFIPSAYP (384 aa). The chain crosses the membrane as a helical span at residues 411–430; the sequence is YYASAFSMMLGLFIFSIVFL. Topologically, residues 431 to 439 are cytoplasmic; sequence HMKEKEKSD.

Belongs to the DDOST 48 kDa subunit family. As to quaternary structure, component of the oligosaccharyltransferase (OST) complex. OST exists in two different complex forms which contain common core subunits RPN1, RPN2, OST48, OST4, DAD1 and TMEM258, either STT3A or STT3B as catalytic subunits, and form-specific accessory subunits. STT3A complex assembly occurs through the formation of 3 subcomplexes. Subcomplex 1 contains RPN1 and TMEM258, subcomplex 2 contains the STT3A-specific subunits STT3A, DC2/OSTC, and KCP2 as well as the core subunit OST4, and subcomplex 3 contains RPN2, DAD1, and OST48. The STT3A complex can form stable complexes with the Sec61 complex or with both the Sec61 and TRAP complexes. Interacts with SMIM22.

It is found in the endoplasmic reticulum membrane. Its pathway is protein modification; protein glycosylation. Subunit of the oligosaccharyl transferase (OST) complex that catalyzes the initial transfer of a defined glycan (Glc(3)Man(9)GlcNAc(2) in eukaryotes) from the lipid carrier dolichol-pyrophosphate to an asparagine residue within an Asn-X-Ser/Thr consensus motif in nascent polypeptide chains, the first step in protein N-glycosylation. N-glycosylation occurs cotranslationally and the complex associates with the Sec61 complex at the channel-forming translocon complex that mediates protein translocation across the endoplasmic reticulum (ER). All subunits are required for a maximal enzyme activity. Required for the assembly of both SST3A- and SS3B-containing OST complexes. The protein is Dolichyl-diphosphooligosaccharide--protein glycosyltransferase 48 kDa subunit of Pongo abelii (Sumatran orangutan).